Reading from the N-terminus, the 42-residue chain is uncharacterized protein (42 aa).

The segment at 1 to 42 (MTTGKPQSFEKMRTPFPGRSKAKGPQSDIIPSAPPNTPVTEH) is disordered. Pro residues predominate over residues 32–42 (SAPPNTPVTEH).

This is an uncharacterized protein from Schizosaccharomyces pombe (strain 972 / ATCC 24843) (Fission yeast).